The following is a 346-amino-acid chain: MSHTVADMSRWTGRAEPFETARARYWYQLAQHYAFDSTSQQNGQRIGLVGFACDQGVRRNQGRVGAKAAPPLIRQAFAALPVIAELQQRFDGQLPTLLGDAGDIHCHDNDDFAANMLEQAQLNYADKVSQIIKQGGLPIGLGGGHAIAYGSFLGLWQALQQTDTNSDTDALPRIGIINFDAHLDIRQSDVATSGTPFRQIAEHLDEQGQPFNYCCIGVSRFSNTAALFDRAEQLGVDIISDEDCTNKKWKKIAAQIADFIESVDIIYLTIDMDCLPSSVVPGVSAPAAYGIELSFVERAVKLILCSGKVKVADIAEINPTFDIDSRSCKVAARLLATIIEQHLLNL.

His145, Asp180, His182, Asp184, Asp271, and Asp273 together coordinate Mn(2+).

This sequence belongs to the arginase family. Mn(2+) is required as a cofactor.

The catalysed reaction is N-formimidoyl-L-glutamate + H2O = formamide + L-glutamate. It participates in amino-acid degradation; L-histidine degradation into L-glutamate; L-glutamate from N-formimidoyl-L-glutamate (hydrolase route): step 1/1. In terms of biological role, catalyzes the conversion of N-formimidoyl-L-glutamate to L-glutamate and formamide. In Psychrobacter cryohalolentis (strain ATCC BAA-1226 / DSM 17306 / VKM B-2378 / K5), this protein is Formimidoylglutamase.